Consider the following 591-residue polypeptide: Autotransporter adhesin NhhA (591 aa).

An N-terminal signal peptide occupies residues 1 to 51; the sequence is MNKIYRIIWNSALNAWVVVSELTRNHTKRASATVKTAVLATLLFATVQASA. The surface exposed passenger domain stretch occupies residues 52 to 503; it reads NNEEQEEDLY…TNVAQLKGVA (452 aa). The interval 504–591 is translocator domain; it reads QNLNNRIDNV…GASASVGYQW (88 aa). 4 consecutive transmembrane segments (beta stranded) span residues 537-547, 551-561, 570-576, and 580-591; these read GKSMMAIGGGT, EAGYAIGYSSI, KGTASGN, and HFGASASVGYQW.

The protein belongs to the autotransporter-2 (AT-2) (TC 1.B.40) family. In terms of assembly, homotrimer.

The protein localises to the cell surface. Its subcellular location is the cell outer membrane. Involved in adhesion of capsulated meningococci to host epithelial cells. Interacts with laminin and heparan sulfate, promoting the adherence to the extracellular matrix (ECM) components. The polypeptide is Autotransporter adhesin NhhA (Neisseria meningitidis serogroup B (strain ATCC BAA-335 / MC58)).